Consider the following 457-residue polypeptide: Gamma-aminobutyric acid receptor subunit gamma-4 (457 aa).

The N-terminal stretch at 1 to 21 is a signal peptide; that stretch reads MPAMVLLLCLALGPALRSARC. The Extracellular portion of the chain corresponds to 22–256; it reads ESTEEYDYDY…VSFDLSRRMG (235 aa). 2 N-linked (GlcNAc...) asparagine glycosylation sites follow: Asn35 and Asn112. Cysteines 173 and 187 form a disulfide. Residue Asn230 is glycosylated (N-linked (GlcNAc...) asparagine). Helical transmembrane passes span 257-279, 283-305, and 317-339; these read YFAI…SFWI, STPA…STIS, and AMDL…YATL. Residues 340 to 433 are Cytoplasmic-facing; it reads NYLVGNKKPL…VRIHISRLDS (94 aa). The chain crosses the membrane as a helical span at residues 434 to 457; it reads YSRVFFPTAFLLFNIVYWIAYLYL.

The protein belongs to the ligand-gated ion channel (TC 1.A.9) family. Gamma-aminobutyric acid receptor (TC 1.A.9.5) subfamily. GABRG4 sub-subfamily. As to quaternary structure, generally pentameric. There are five types of GABA(A) receptor chains: alpha, beta, gamma, delta, and rho. In terms of tissue distribution, abundant in several brain regions, including the ectostriatum, nucleus rotundus and hyperstriatum ventrale.

It localises to the postsynaptic cell membrane. The protein localises to the cell membrane. In terms of biological role, GABA, the major inhibitory neurotransmitter in the vertebrate brain, mediates neuronal inhibition by binding to the GABA/benzodiazepine receptor and opening an integral chloride channel. The protein is Gamma-aminobutyric acid receptor subunit gamma-4 (GABRG4) of Gallus gallus (Chicken).